A 177-amino-acid chain; its full sequence is MSEFVTVARPYAKAAFDFAVEHQSLDRWQDMLAFAAEVAKNEQMAELLSGALAPETLAESFIAICGDQLDANGQNLIRVMAENGRLKVLPDVLEQFIQLRAALEATVEVEVTSASALSDEQLAKISAAMEKRLSRKVKLNCKIDKSVMAGVIIRSGDTVIDGSVRGRLERLADVLQS.

Belongs to the ATPase delta chain family. F-type ATPases have 2 components, F(1) - the catalytic core - and F(0) - the membrane proton channel. F(1) has five subunits: alpha(3), beta(3), gamma(1), delta(1), epsilon(1). F(0) has three main subunits: a(1), b(2) and c(10-14). The alpha and beta chains form an alternating ring which encloses part of the gamma chain. F(1) is attached to F(0) by a central stalk formed by the gamma and epsilon chains, while a peripheral stalk is formed by the delta and b chains.

It is found in the cell inner membrane. F(1)F(0) ATP synthase produces ATP from ADP in the presence of a proton or sodium gradient. F-type ATPases consist of two structural domains, F(1) containing the extramembraneous catalytic core and F(0) containing the membrane proton channel, linked together by a central stalk and a peripheral stalk. During catalysis, ATP synthesis in the catalytic domain of F(1) is coupled via a rotary mechanism of the central stalk subunits to proton translocation. Its function is as follows. This protein is part of the stalk that links CF(0) to CF(1). It either transmits conformational changes from CF(0) to CF(1) or is implicated in proton conduction. This Cronobacter sakazakii (strain ATCC BAA-894) (Enterobacter sakazakii) protein is ATP synthase subunit delta.